The chain runs to 229 residues: Uracil-DNA glycosylase (229 aa).

Asp-67 serves as the catalytic Proton acceptor.

Belongs to the uracil-DNA glycosylase (UDG) superfamily. UNG family.

Its subcellular location is the cytoplasm. The catalysed reaction is Hydrolyzes single-stranded DNA or mismatched double-stranded DNA and polynucleotides, releasing free uracil.. Excises uracil residues from the DNA which can arise as a result of misincorporation of dUMP residues by DNA polymerase or due to deamination of cytosine. The chain is Uracil-DNA glycosylase from Coxiella burnetii (strain CbuG_Q212) (Coxiella burnetii (strain Q212)).